A 92-amino-acid polypeptide reads, in one-letter code: Acylphosphatase (92 aa).

Cys5 and Cys49 form a disulfide bridge. In terms of domain architecture, Acylphosphatase-like spans 5–92 (CIIAWIYGRV…SGELTDFRIR (88 aa)). Residues Arg20 and Asn38 contribute to the active site.

It belongs to the acylphosphatase family.

The enzyme catalyses an acyl phosphate + H2O = a carboxylate + phosphate + H(+). This chain is Acylphosphatase, found in Shigella boydii serotype 4 (strain Sb227).